Reading from the N-terminus, the 1465-residue chain is DNA polymerase III PolC-type (1465 aa).

The Exonuclease domain occupies 431-583 (DVETTGLSAM…YDAEATGRLL (153 aa)).

The protein belongs to the DNA polymerase type-C family. PolC subfamily.

The protein resides in the cytoplasm. It catalyses the reaction DNA(n) + a 2'-deoxyribonucleoside 5'-triphosphate = DNA(n+1) + diphosphate. Functionally, required for replicative DNA synthesis. This DNA polymerase also exhibits 3' to 5' exonuclease activity. In Streptococcus pyogenes, this protein is DNA polymerase III PolC-type.